The sequence spans 440 residues: Chromosome partition protein MukF (440 aa).

Residues 208–236 (LSETSGTLRELQDTLEAAGDKLQANLLRI) form a leucine-zipper region.

Belongs to the MukF family. In terms of assembly, interacts, and probably forms a ternary complex, with MukE and MukB via its C-terminal region. The complex formation is stimulated by calcium or magnesium. It is required for an interaction between MukE and MukB.

The protein localises to the cytoplasm. Its subcellular location is the nucleoid. Its function is as follows. Involved in chromosome condensation, segregation and cell cycle progression. May participate in facilitating chromosome segregation by condensation DNA from both sides of a centrally located replisome during cell division. Not required for mini-F plasmid partitioning. Probably acts via its interaction with MukB and MukE. Overexpression results in anucleate cells. It has a calcium binding activity. This chain is Chromosome partition protein MukF, found in Serratia proteamaculans (strain 568).